Consider the following 160-residue polypeptide: Cell division protein SepF (160 aa).

The segment covering 18 to 30 (AEGEDDFEDDVDT) has biased composition (acidic residues). Positions 18-72 (AEGEDDFEDDVDTGETSFDSDHSVTPMPSSSASASTPSAPREQSNPFQGGRVSRI) are disordered. A compositionally biased stretch (low complexity) spans 45-57 (PSSSASASTPSAP).

It belongs to the SepF family. Homodimer. Interacts with FtsZ.

Its subcellular location is the cytoplasm. Cell division protein that is part of the divisome complex and is recruited early to the Z-ring. Probably stimulates Z-ring formation, perhaps through the cross-linking of FtsZ protofilaments. Its function overlaps with FtsA. The chain is Cell division protein SepF from Bifidobacterium adolescentis (strain ATCC 15703 / DSM 20083 / NCTC 11814 / E194a).